We begin with the raw amino-acid sequence, 22 residues long: 65 kDa membrane protein (22 aa).

The interval 1–22 (AAKPLDKSSSSLHHGYSKVHVP) is disordered.

The protein resides in the cell membrane. Its function is as follows. Binds various plasma and ECM-proteins. This is 65 kDa membrane protein from Staphylococcus aureus.